We begin with the raw amino-acid sequence, 438 residues long: MCKDYVYDKDIEQIAKEEQGEALKLQASTSTEVSHQQCSVPGLGEKFPTWETTKPELELLGHNPRRRRITSSFTIGLRGLINLGNTCFMNCIVQALTHTPILRDFFLSDRHRCEMPSPELCLVCEMSSLFRELYSGNPSPHVPYKLLHLVWIHARHLAGYRQQDAHEFLIAALDVLHRHCKGDDVGKAANNPNHCNCIIDQIFTGGLQSDVTCQACHGVSTTIDPCWDISLDLPGSCTSFWPMSPGRESSVNGESHIPGITTLTDCLRRFTRPEHLGSSAKIKCGSCQSYQESTKQLTMNKLPVVACFHFKRFEHSAKQRRKITTYISFPLELDMTPFMASSKESRMNGQLQLPTNSGNNENKYSLFAVVNHQGTLESGHYTSFIRHHKDQWFKCDDAVITKASIKDVLDSEGYLLFYHKQVLEHESEKVKEMNTQAY.

One can recognise a USP domain in the interval 78–421 (RGLINLGNTC…EGYLLFYHKQ (344 aa)). The Nucleophile role is filled by Cys-87. Residue His-380 is the Proton acceptor of the active site.

Belongs to the peptidase C19 family. Interacts with phosphorylated BCL2L11 isoform BIMEL; this interaction leads to BCL2L11 deubiquitination and stabilization.

Its subcellular location is the cytoplasm. It localises to the cytosol. The protein resides in the nucleus. It carries out the reaction Thiol-dependent hydrolysis of ester, thioester, amide, peptide and isopeptide bonds formed by the C-terminal Gly of ubiquitin (a 76-residue protein attached to proteins as an intracellular targeting signal).. In terms of biological role, deubiquitinase involved in innate antiviral immunity by mediating deubiquitination of CGAS and RIGI. Negatively regulates RIGI by mediating 'Lys-63'-linked deubiquitination of RIGI, inhibiting type I interferon signaling. Also regulates 'Lys-63'-linked ubiquitination level of MDA5/IFIH1. Acts as a positive regulator of the cGAS-STING pathway by catalyzing 'Lys-48'-linked deubiquitination of CGAS, thereby promoting its stabilization. Can reduce the levels of BCL2L11/BIM ubiquitination and stabilize BCL2L11 in response to the RAF-MAPK-degradation signal. By acting on BCL2L11 levels, may counteract the anti-apoptotic effects of MAPK activity. This Homo sapiens (Human) protein is Ubiquitin carboxyl-terminal hydrolase 27.